The following is a 1874-amino-acid chain: WD repeat-containing protein 90 (1874 aa).

The segment at 1–59 (MAGGSGARETRCRQGSRPGSPGSEVPAASVTGPRAEARPAGGGGGSRRAAPDRCSGGVP) is disordered. Phosphoserine is present on residues Ser-16 and Ser-20. The tract at residues 59–267 (PSAAWQHPFL…VNPMPREMAF (209 aa)) is binds with microtubules. At Ser-301 the chain carries Phosphoserine. 10 WD repeats span residues 469 to 512 (GHTD…SLFR), 514 to 556 (PLHT…LGGE), 563 to 603 (VHTD…LRSC), 677 to 716 (SVGS…VLLE), 718 to 757 (EHDG…YTVL), 760 to 799 (SHMA…QLYD), 844 to 883 (RHRG…CCVL), 944 to 984 (NHLD…TLRE), 988 to 1026 (VRSR…NPSC), and 1031 to 1068 (GHSE…ERDG). The span at 1066–1075 (RDGGDHEAPP) shows a compositional bias: basic and acidic residues. Disordered regions lie at residues 1066–1132 (RDGG…SDEE) and 1160–1211 (ASGA…HFTP). 11 WD repeats span residues 1280 to 1325 (GHSQ…CRHL), 1328 to 1369 (HHDT…LLSS), 1371 to 1412 (RLLE…TCFQ), 1422 to 1460 (LGAS…CFLA), 1462 to 1500 (EADD…ELRR), 1559 to 1598 (GHRT…LVIQ), 1601 to 1646 (VLNQ…MELK), 1649 to 1688 (PHRT…TFRV), 1695 to 1740 (APIS…DRCE), 1800 to 1839 (PLPF…AQDL), and 1841 to 1874 (GHDD…VTDP).

The protein belongs to the WD repeat WDR90/POC16 family.

It localises to the cytoplasm. Its subcellular location is the cytoskeleton. It is found in the microtubule organizing center. The protein localises to the centrosome. The protein resides in the centriole. It localises to the centriolar satellite. Its function is as follows. Microtubule-binding protein that plays a crucial role in ensuring inner core protein localization within the centriole core, as well as in maintaining the microtubule wall integrity and the overall centriole roundness and stability. Required for efficient primary cilium formation. This Mus musculus (Mouse) protein is WD repeat-containing protein 90 (Wdr90).